The following is a 1029-amino-acid chain: Toll-like receptor 9 (1029 aa).

The N-terminal stretch at 1 to 24 (MGPYCAPHPLSLLVQAAALAAALA) is a signal peptide. At 25–815 (EGTLPAFLPC…LCLDETLSLD (791 aa)) the chain is on the extracellular side. A disulfide bridge connects residues cysteine 34 and cysteine 44. 46–50 (WLFLK) serves as a coordination point for DNA. 26 LRR repeats span residues 61–84 (RANV…DFVH), 86–109 (SNLR…HFPC), 121–146 (VPTL…SLVS), 149–165 (LSHT…FTGL), 166–189 (HALR…ALEV), 197–220 (LGNL…LPPS), 222–241 (DTLL…DLAN), 242–267 (LTAL…CREC), 282–305 (LSRL…WFRG), 307–331 (GRLQ…IFND), 332–355 (LTQL…HLHL), 362–385 (LVSL…TLQS), 389–412 (LPKL…IFGA), 414–439 (PSLL…LGEV), 469–492 (CNLN…MFTR), 494–517 (SRLQ…QFVP), 518–541 (LTSL…SFTE), 543–570 (PQLE…SFVA), 572–596 (LPSL…LSSA), 598–620 (LRAL…LYLC), 625–648 (LRNL…HLDN), 650–673 (PKSL…SLTV), 674–697 (LPRL…SLPP), 699–721 (IRLQ…FFVR), 722–745 (ATRL…WFGS), and 747–770 (AGTL…AFVD). N-linked (GlcNAc...) asparagine glycosylation is present at asparagine 63. Residues 71 to 76 (SNRIHH) and 94 to 108 (KWNC…MHFP) contribute to the DNA site. Residues cysteine 97 and cysteine 109 are joined by a disulfide bond. A glycan (N-linked (GlcNAc...) asparagine) is linked at asparagine 128. Tyrosine 131 lines the DNA pocket. A disulfide bridge links cysteine 177 with cysteine 183. 178-180 (YYM) provides a ligand contact to DNA. The N-linked (GlcNAc...) asparagine glycan is linked to asparagine 199. Tyrosine 207 is a DNA binding site. Residues asparagine 209 and asparagine 241 are each glycosylated (N-linked (GlcNAc...) asparagine). 2 disulfide bridges follow: cysteine 254–cysteine 267 and cysteine 257–cysteine 264. Cysteine 257 carries S-palmitoyl cysteine lipidation. Arginine 261 is a DNA binding site. Residue cysteine 264 is the site of S-palmitoyl cysteine attachment. Residues asparagine 339 and asparagine 380 are each glycosylated (N-linked (GlcNAc...) asparagine). Cysteine 469 and cysteine 498 are joined by a disulfide. Residues asparagine 472 and asparagine 511 are each glycosylated (N-linked (GlcNAc...) asparagine). Asparagine 565 carries N-linked (GlcNAc...) asparagine glycosylation. Residues asparagine 667 and asparagine 692 are each glycosylated (N-linked (GlcNAc...) asparagine). N-linked (GlcNAc...) asparagine glycosylation is present at asparagine 729. Intrachain disulfides connect cysteine 762-cysteine 788 and cysteine 764-cysteine 807. A helical membrane pass occupies residues 816 to 836 (CFGLSLLMVALGLAVPMLHHL). At 837–1029 (CGWDLWYCFH…NFCRGPTTAE (193 aa)) the chain is on the cytoplasmic side. In terms of domain architecture, TIR spans 864–1009 (LLYDAVVVFD…SFWANLGIAL (146 aa)).

The protein belongs to the Toll-like receptor family. Monomer and homodimer. Exists as a monomer in the absence of unmethylated cytidine-phosphate-guanosine (CpG) ligand. Proteolytic processing of an insertion loop (Z-loop) is required for homodimerization upon binding to the unmethylated CpG ligand leading to its activation. Interacts with MYD88 via their respective TIR domains. Interacts with BTK. Interacts (via transmembrane domain) with UNC93B1. Interacts with CD300LH; the interaction may promote full activation of TLR9-triggered innate responses. Interacts with CNPY3 and HSP90B1; this interaction is required for proper folding in the endoplasmic reticulum. Interacts with SMPDL3B. Interacts with CD82; this interaction is essential for TLR9-dependent myddosome formation in response to CpG stimulation. Activated by proteolytic cleavage of the flexible loop between repeats LRR14 and LRR15 within the ectodomain. Cleavage requires UNC93B1. Proteolytically processed by first removing the majority of the ectodomain by either asparagine endopeptidase (AEP) or a cathepsin followed by a trimming event that is solely cathepsin mediated and required for optimal receptor signaling. In terms of processing, palmitoylated by ZDHHC3 in the Golgi regulates TLR9 trafficking from the Golgi to endosomes. Depalmitoylation by PPT1 controls the release of TLR9 from UNC93B1 in endosomes.

The protein resides in the endoplasmic reticulum membrane. It is found in the endosome. Its subcellular location is the lysosome. The protein localises to the cytoplasmic vesicle. It localises to the phagosome. Functionally, key component of innate and adaptive immunity. TLRs (Toll-like receptors) control host immune response against pathogens through recognition of molecular patterns specific to microorganisms. TLR9 is a nucleotide-sensing TLR which is activated by unmethylated cytidine-phosphate-guanosine (CpG) dinucleotides. Acts via MYD88 and TRAF6, leading to NF-kappa-B activation, cytokine secretion and the inflammatory response. Upon CpG stimulation, induces B-cell proliferation, activation, survival and antibody production. The chain is Toll-like receptor 9 (TLR9) from Bos taurus (Bovine).